A 226-amino-acid polypeptide reads, in one-letter code: Deoxyribose-phosphate aldolase (226 aa).

The Proton donor/acceptor role is filled by Asp93. Lys159 (schiff-base intermediate with acetaldehyde) is an active-site residue. Lys189 serves as the catalytic Proton donor/acceptor.

This sequence belongs to the DeoC/FbaB aldolase family. DeoC type 1 subfamily.

It is found in the cytoplasm. It carries out the reaction 2-deoxy-D-ribose 5-phosphate = D-glyceraldehyde 3-phosphate + acetaldehyde. It functions in the pathway carbohydrate degradation; 2-deoxy-D-ribose 1-phosphate degradation; D-glyceraldehyde 3-phosphate and acetaldehyde from 2-deoxy-alpha-D-ribose 1-phosphate: step 2/2. Its function is as follows. Catalyzes a reversible aldol reaction between acetaldehyde and D-glyceraldehyde 3-phosphate to generate 2-deoxy-D-ribose 5-phosphate. The sequence is that of Deoxyribose-phosphate aldolase from Mycobacterium marinum (strain ATCC BAA-535 / M).